A 276-amino-acid polypeptide reads, in one-letter code: Large ribosomal subunit protein uL2 (276 aa).

The disordered stretch occupies residues 218-255 (PTVRGSAMNPCDHPHGGGEGRTPIGMSSPVTPWGKPAL).

It belongs to the universal ribosomal protein uL2 family. Part of the 50S ribosomal subunit. Forms a bridge to the 30S subunit in the 70S ribosome.

Functionally, one of the primary rRNA binding proteins. Required for association of the 30S and 50S subunits to form the 70S ribosome, for tRNA binding and peptide bond formation. It has been suggested to have peptidyltransferase activity; this is somewhat controversial. Makes several contacts with the 16S rRNA in the 70S ribosome. This Clostridium tetani (strain Massachusetts / E88) protein is Large ribosomal subunit protein uL2.